The following is a 293-amino-acid chain: tRNA pseudouridine synthase B (293 aa).

The active-site Nucleophile is D40.

Belongs to the pseudouridine synthase TruB family. Type 1 subfamily.

It carries out the reaction uridine(55) in tRNA = pseudouridine(55) in tRNA. Responsible for synthesis of pseudouridine from uracil-55 in the psi GC loop of transfer RNAs. The polypeptide is tRNA pseudouridine synthase B (Mycolicibacterium paratuberculosis (strain ATCC BAA-968 / K-10) (Mycobacterium paratuberculosis)).